The following is a 192-amino-acid chain: Peptide methionine sulfoxide reductase MsrA 1 (192 aa).

The active site involves C25.

This sequence belongs to the MsrA Met sulfoxide reductase family.

It carries out the reaction L-methionyl-[protein] + [thioredoxin]-disulfide + H2O = L-methionyl-(S)-S-oxide-[protein] + [thioredoxin]-dithiol. The catalysed reaction is [thioredoxin]-disulfide + L-methionine + H2O = L-methionine (S)-S-oxide + [thioredoxin]-dithiol. Has an important function as a repair enzyme for proteins that have been inactivated by oxidation. Catalyzes the reversible oxidation-reduction of methionine sulfoxide in proteins to methionine. This Rhodopirellula baltica (strain DSM 10527 / NCIMB 13988 / SH1) protein is Peptide methionine sulfoxide reductase MsrA 1.